We begin with the raw amino-acid sequence, 669 residues long: Putative transcription factor SOX-14 (669 aa).

The span at 1 to 12 (MIAKPNQATTEP) shows a compositional bias: polar residues. Disordered regions lie at residues 1–149 (MIAK…EMTL), 254–336 (YKYR…PKYE), and 419–439 (SSLTQSQHNQSDPTAGLMDNI). Positions 17-37 (RPGTVPTVPATTPARPATITI) are enriched in low complexity. Residues 52-71 (TLPPFSPSPSPASSPSPAPA) are compositionally biased toward pro residues. A compositionally biased stretch (polar residues) spans 75–84 (GAQKTQSQAA). The span at 88 to 105 (PAAVASPSAPVAAAAPKT) shows a compositional bias: low complexity. Basic and acidic residues predominate over residues 130–145 (RESEMDGERSPSHSGH). The segment at residues 187-255 (IKRPMNAFMV…LHMIEYPNYK (69 aa)) is a DNA-binding region (HMG box). Residues 284–294 (TTNNNNSLTTL) are compositionally biased toward low complexity. The span at 295-318 (AINGTTTAGRKSKRSTSTCQSGSA) shows a compositional bias: polar residues. Basic and acidic residues predominate over residues 322–336 (LRNDSGDTSSKPKYE). The span at 419-431 (SSLTQSQHNQSDP) shows a compositional bias: polar residues.

It is found in the nucleus. The polypeptide is Putative transcription factor SOX-14 (Sox14) (Drosophila melanogaster (Fruit fly)).